The primary structure comprises 317 residues: MARRPKGRFIDGIVLLDKDTGMSSNFALQRVKRFFNANKAGHTGALDPLATGMLPICLGEATKFSQHLLDSDKRYLVTAKLGQRTDTSDSDGEVVQTRPVNVTQALLDEKLAFFRGTTQQIPSMYSALKYQGQPLYKYAREGIEVPRESRPITVFELNFIKLEGDELTLDIHCSKGTYIRTIIDDLGEMLGCGAHVVMLRRTQVAEYPYEKMVTLAQLEALLEQAHRQDVAPQTLMDPLLLPMDTAVAKFAEINLPEAMLYYVMQGQAIQAAGLKPDELVRITIGDERRFVGMGIMNDDGLLAPKRLIVIHDNDAAE.

Catalysis depends on Asp-47, which acts as the Nucleophile.

The protein belongs to the pseudouridine synthase TruB family. Type 1 subfamily.

It catalyses the reaction uridine(55) in tRNA = pseudouridine(55) in tRNA. Functionally, responsible for synthesis of pseudouridine from uracil-55 in the psi GC loop of transfer RNAs. The protein is tRNA pseudouridine synthase B of Shewanella frigidimarina (strain NCIMB 400).